A 361-amino-acid chain; its full sequence is Putative F-box protein At3g19560 (361 aa).

The 47-residue stretch at 3–49 (MTMMSDISQDLLEEILSRVPITSLRAVKSTCKRWKDLLNDPSFSKKY) folds into the F-box domain.

The sequence is that of Putative F-box protein At3g19560 from Arabidopsis thaliana (Mouse-ear cress).